The primary structure comprises 414 residues: Arrestin domain-containing protein 3 (414 aa).

2 consecutive short sequence motifs (PPxY motif) follow at residues 346-349 and 391-394; these read PPSY and PPLY. The tract at residues 393-414 is disordered; sequence LYSEIDPNPDQSADDRPSCPSR. Residues 405–414 show a composition bias toward basic and acidic residues; that stretch reads ADDRPSCPSR.

This sequence belongs to the arrestin family. Interacts (via PPxY motifs) with NEDD4 (via WW domains). Interacts with ADRB2. Interacts with ADRB3. Interacts with HGS (via PPxY motifs). Does not bind TXN (thioredoxin). Interacts with ITCH. Interacts with WWP1 (via WW domains). Highly expressed in skeletal muscle, placenta, kidney, lung, liver, blood, adrenal gland, lymph node, mammary gland, thyroid, and trachea. Very low levels in colon, thymus, spleen, small intestine, bladder and bone marrow. Strong expression in differentiated adipocytes compared to preadipocytes. Detected in omental fat and subcutaneous fat tissue.

Its subcellular location is the cytoplasm. The protein resides in the cell membrane. It localises to the lysosome. The protein localises to the endosome. It is found in the early endosome. In terms of biological role, adapter protein that plays a role in regulating cell-surface expression of adrenergic receptors and probably also other G protein-coupled receptors. Plays a role in NEDD4-mediated ubiquitination and endocytosis af activated ADRB2 and subsequent ADRB2 degradation. May recruit NEDD4 to ADRB2. Alternatively, may function as adapter protein that does not play a major role in recruiting NEDD4 to ADRB2, but rather plays a role in a targeting ADRB2 to endosomes. The protein is Arrestin domain-containing protein 3 (ARRDC3) of Homo sapiens (Human).